Consider the following 286-residue polypeptide: Polyamine aminopropyltransferase (286 aa).

The 235-residue stretch at 1 to 235 folds into the PABS domain; the sequence is MSDYQETLYE…GAMTFAWGAT (235 aa). Glutamine 30 is an S-methyl-5'-thioadenosine binding site. Positions 61 and 85 each coordinate spermidine. S-methyl-5'-thioadenosine-binding positions include glutamate 105 and 137-138; that span reads DG. Aspartate 155 functions as the Proton acceptor in the catalytic mechanism. A spermidine-binding site is contributed by 155 to 158; that stretch reads DSTD. Residue proline 162 participates in S-methyl-5'-thioadenosine binding.

The protein belongs to the spermidine/spermine synthase family. In terms of assembly, homodimer or homotetramer.

The protein resides in the cytoplasm. The enzyme catalyses S-adenosyl 3-(methylsulfanyl)propylamine + putrescine = S-methyl-5'-thioadenosine + spermidine + H(+). It functions in the pathway amine and polyamine biosynthesis; spermidine biosynthesis; spermidine from putrescine: step 1/1. Catalyzes the irreversible transfer of a propylamine group from the amino donor S-adenosylmethioninamine (decarboxy-AdoMet) to putrescine (1,4-diaminobutane) to yield spermidine. In Pseudomonas syringae pv. tomato (strain ATCC BAA-871 / DC3000), this protein is Polyamine aminopropyltransferase.